Here is a 361-residue protein sequence, read N- to C-terminus: Ribosomal RNA small subunit methyltransferase H (361 aa).

S-adenosyl-L-methionine is bound by residues 54 to 56 (GGH), Asp-74, Tyr-101, Asp-122, and Gln-129. The disordered stretch occupies residues 318 to 361 (ARNSRASSAKLRAAQRLAEGQAPRPRRRNKYAPEGRDEPEGGAA). Positions 348-361 (YAPEGRDEPEGGAA) are enriched in basic and acidic residues.

Belongs to the methyltransferase superfamily. RsmH family.

Its subcellular location is the cytoplasm. The enzyme catalyses cytidine(1402) in 16S rRNA + S-adenosyl-L-methionine = N(4)-methylcytidine(1402) in 16S rRNA + S-adenosyl-L-homocysteine + H(+). Specifically methylates the N4 position of cytidine in position 1402 (C1402) of 16S rRNA. In Nitratidesulfovibrio vulgaris (strain DSM 19637 / Miyazaki F) (Desulfovibrio vulgaris), this protein is Ribosomal RNA small subunit methyltransferase H.